The chain runs to 164 residues: Endoribonuclease YbeY (164 aa).

H114, H118, and H124 together coordinate Zn(2+).

This sequence belongs to the endoribonuclease YbeY family. Zn(2+) is required as a cofactor.

The protein resides in the cytoplasm. Single strand-specific metallo-endoribonuclease involved in late-stage 70S ribosome quality control and in maturation of the 3' terminus of the 16S rRNA. This Mycoplasmoides gallisepticum (strain R(low / passage 15 / clone 2)) (Mycoplasma gallisepticum) protein is Endoribonuclease YbeY.